We begin with the raw amino-acid sequence, 126 residues long: Large ribosomal subunit protein eL14 (126 aa).

This sequence belongs to the eukaryotic ribosomal protein eL14 family.

The chain is Large ribosomal subunit protein eL14 (RPL14) from Tetrahymena thermophila (strain SB210).